Consider the following 412-residue polypeptide: MKIYLVGGAVRDALLGLPVKDRDWVVVGSTPQEMLDAGYQQVGRDFPVFLHPQTHEEYALARTERKSGSGYTGFTCYAAPDVTLEDDLKRRDLTINALAQDDNGEIIDPYNGLGDLQNRLLRHVSPAFGEDPLRVLRVARFAARYAHLGFRIADETLALMREMTHAGELEHLTPERVWKETESALTTRNPQVFFQVLRDCGALRVLFPEIDALFGVPAPARWHPEIDTGIHTLMTLSMAAMLSPQVDVRFATLCHDLGKGLTPPELWPRHHGHGPAGVKLVEQLCQRLRVPSEIRDLARLVAEFHDLIHTFPMLNPKTIVKLFDSIDAWRKPQRVEQLALTSEADVRGRTGFESADYPQGRWLREAWEVAQSVPTKAVVEAGFKGVGIREELTRRRIAAVASWKEQRCPKPD.

ATP is bound by residues G8 and R11. CTP is bound by residues G8 and R11. 2 residues coordinate Mg(2+): D21 and D23. ATP is bound by residues R91, R137, and R140. Residues R91, R137, and R140 each coordinate CTP. An HD domain is found at 228-329; it reads TGIHTLMTLS…VKLFDSIDAW (102 aa).

The protein belongs to the tRNA nucleotidyltransferase/poly(A) polymerase family. Bacterial CCA-adding enzyme type 1 subfamily. Monomer. Can also form homodimers and oligomers. Mg(2+) serves as cofactor. The cofactor is Ni(2+).

It catalyses the reaction a tRNA precursor + 2 CTP + ATP = a tRNA with a 3' CCA end + 3 diphosphate. It carries out the reaction a tRNA with a 3' CCA end + 2 CTP + ATP = a tRNA with a 3' CCACCA end + 3 diphosphate. Its function is as follows. Catalyzes the addition and repair of the essential 3'-terminal CCA sequence in tRNAs without using a nucleic acid template. Adds these three nucleotides in the order of C, C, and A to the tRNA nucleotide-73, using CTP and ATP as substrates and producing inorganic pyrophosphate. tRNA 3'-terminal CCA addition is required both for tRNA processing and repair. Also involved in tRNA surveillance by mediating tandem CCA addition to generate a CCACCA at the 3' terminus of unstable tRNAs. While stable tRNAs receive only 3'-terminal CCA, unstable tRNAs are marked with CCACCA and rapidly degraded. This chain is Multifunctional CCA protein, found in Escherichia coli O6:K15:H31 (strain 536 / UPEC).